Consider the following 314-residue polypeptide: Thymidylate synthase (314 aa).

DUMP is bound by residues R21 and 176 to 177; that span reads RR. C196 (nucleophile) is an active-site residue. Residues 216 to 219, N227, and 257 to 259 each bind dUMP; these read RSAD and HLY. D219 lines the (6R)-5,10-methylene-5,6,7,8-tetrahydrofolate pocket. Residue S313 participates in (6R)-5,10-methylene-5,6,7,8-tetrahydrofolate binding.

It belongs to the thymidylate synthase family. Bacterial-type ThyA subfamily. Homodimer.

The protein resides in the cytoplasm. It carries out the reaction dUMP + (6R)-5,10-methylene-5,6,7,8-tetrahydrofolate = 7,8-dihydrofolate + dTMP. It participates in pyrimidine metabolism; dTTP biosynthesis. Functionally, catalyzes the reductive methylation of 2'-deoxyuridine-5'-monophosphate (dUMP) to 2'-deoxythymidine-5'-monophosphate (dTMP) while utilizing 5,10-methylenetetrahydrofolate (mTHF) as the methyl donor and reductant in the reaction, yielding dihydrofolate (DHF) as a by-product. This enzymatic reaction provides an intracellular de novo source of dTMP, an essential precursor for DNA biosynthesis. The chain is Thymidylate synthase from Listeria monocytogenes serotype 4b (strain F2365).